An 84-amino-acid chain; its full sequence is Small ribosomal subunit protein bS18A (84 aa).

It belongs to the bacterial ribosomal protein bS18 family. In terms of assembly, part of the 30S ribosomal subunit. Forms a tight heterodimer with protein bS6.

Its function is as follows. Binds as a heterodimer with protein bS6 to the central domain of the 16S rRNA, where it helps stabilize the platform of the 30S subunit. The protein is Small ribosomal subunit protein bS18A (rpsR1) of Mycobacterium bovis (strain ATCC BAA-935 / AF2122/97).